A 566-amino-acid polypeptide reads, in one-letter code: Liver carboxylesterase 1 (566 aa).

Positions 1–18 are cleaved as a signal peptide; it reads MWLRALVLATLAAFTAWG. N-linked (GlcNAc...) asparagine glycosylation occurs at asparagine 79. Cysteine 87 and cysteine 116 form a disulfide bridge. Residue serine 221 is the Acyl-ester intermediate of the active site. Cysteine 274 and cysteine 285 form a disulfide bridge. Glutamate 354 (charge relay system) is an active-site residue. The residue at position 379 (serine 379) is a Phosphoserine. Catalysis depends on histidine 467, which acts as the Charge relay system.

Belongs to the type-B carboxylesterase/lipase family. Homotrimer and homohexamer. Binds to beta-glucuronidase.

It is found in the endoplasmic reticulum lumen. The protein resides in the cytoplasm. The protein localises to the lipid droplet. It catalyses the reaction a carboxylic ester + H2O = an alcohol + a carboxylate + H(+). The catalysed reaction is cholesteryl (9Z-octadecenoate) + H2O = cholesterol + (9Z)-octadecenoate + H(+). It carries out the reaction 2-(5Z,8Z,11Z,14Z-eicosatetraenoyl)-glycerol + H2O = glycerol + (5Z,8Z,11Z,14Z)-eicosatetraenoate + H(+). The enzyme catalyses prostaglandin E2 1-glyceryl ester + H2O = prostaglandin E2 + glycerol + H(+). It catalyses the reaction a cholesterol ester + H2O = cholesterol + a fatty acid + H(+). The catalysed reaction is prostaglandin F2alpha 1-glyceryl ester + H2O = prostaglandin F2alpha + glycerol + H(+). Involved in the detoxification of xenobiotics and in the activation of ester and amide prodrugs. Hydrolyzes aromatic and aliphatic esters, but has no catalytic activity toward amides or a fatty acyl-CoA ester. Displays fatty acid ethyl ester synthase activity, catalyzing the ethyl esterification of oleic acid to ethyloleate. Converts monoacylglycerides to free fatty acids and glycerol. Hydrolyzes of 2-arachidonoylglycerol and prostaglandins. Hydrolyzes cellular cholesteryl esters to free cholesterols and promotes reverse cholesterol transport (RCT) by facilitating both the initial and final steps in the process. First of all, allows free cholesterol efflux from macrophages to extracellular cholesterol acceptors and secondly, releases free cholesterol from lipoprotein-delivered cholesteryl esters in the liver for bile acid synthesis or direct secretion into the bile. In Macaca fascicularis (Crab-eating macaque), this protein is Liver carboxylesterase 1.